Consider the following 379-residue polypeptide: UPF0450 protein C17orf58 homolog (379 aa).

Residues 1-17 (MIPALTVPLLFLCATSA) form the signal peptide. Disordered regions lie at residues 76–95 (RTRA…PDKT) and 162–194 (TASQ…MNPH). Residues 180–194 (SMDHESNRPGKMNPH) are compositionally biased toward basic and acidic residues. 3 disulfide bridges follow: Cys234–Cys308, Cys238–Cys312, and Cys249–Cys378. In terms of domain architecture, NTR spans 234–378 (CIAECHRDKD…KVLAAAHSKC (145 aa)).

The protein belongs to the UPF0450 family.

This is UPF0450 protein C17orf58 homolog from Xenopus laevis (African clawed frog).